A 268-amino-acid polypeptide reads, in one-letter code: Microtubule-associated protein RP/EB family member 1 (268 aa).

N-acetylalanine is present on Ala-2. Residues 14-116 form the Calponin-homology (CH) domain; the sequence is NLSRHDMLAW…FVQWFKKFFD (103 aa). Lys-66 carries the post-translational modification N6-crotonyllysine. Phosphotyrosine is present on Tyr-124. The interaction with MTUS2/TIP150 stretch occupies residues 124 to 268; that stretch reads YDPVAARQGQ…GGPQEEQEEY (145 aa). The interval 146-191 is disordered; it reads LSKPKKPLGSGSAAPQRPIATQRTTAAPKAGPGMVRKNPGMGNGDD. Ser-155 bears the Phosphoserine mark. The 71-residue stretch at 185-255 folds into the EB1 C-terminal domain; the sequence is GMGNGDDEAA…LYATDEGFVI (71 aa). The interval 206-211 is interaction with APC; that stretch reads TVEDLE. The segment at 208-268 is DCTN1-binding; the sequence is EDLEKERDFY…GGPQEEQEEY (61 aa). N6-acetyllysine is present on Lys-220. The APC-binding stretch occupies residues 220–242; the sequence is KLRNIELICQENEGENDPVLQRI. Residues 232–255 form an interaction with SKA1 region; the sequence is EGENDPVLQRIVDILYATDEGFVI.

The protein belongs to the MAPRE family. Homodimer. Heterodimer with MAPRE3. Interacts with DCTN1, DCTN2, TERF1 and dynein intermediate chain. Interaction with DIAPH1 and DIAPH2. Interacts (via C-terminal residues 206-211) with APC (via C-terminal residues 2674-2845); the interaction inhibits association with and bundling of F-actin. Interacts with CLASP2, DST, KIF2C and STIM1; probably required for their targeting to the growing microtubule plus ends. Interacts with MTUS2; interaction is direct and probably targets MTUS2 to microtubules. Interacts (via C-terminus) with SKA1 (via SXIP motif); the interaction is direct and stabilizes the kinetochore-microtubule attachment of the SKA1 complex. Interacts with APC2. Interacts with CLASP1. Interacts with CDK5RAP2. According to another report, MAPRE1 does not interact with CDK5RAP2. Interacts with MACF1. Interacts with RABL2/RABL2A; binds preferentially to GTP-bound RABL2. Interacts with KCNAB2. Interacts (via C-terminus) with CLIP1. Interacts with SLAIN2 and SLAIN1. Interacts with KIF18B; this interaction is required for efficient accumulation of KIF18B at microtubule plus ends. Interacts with MISP. Interacts with KNSTRN. Interacts with NCKAP5L. Interacts with AKAP9. Interacts with PDE4DIP; this interaction, which is PDE4DIP isoform-specific, is required for its recruitment to the Golgi apparatus. Interacts with CAMSAP2. May form a pericentrosomal complex with AKAP9, CDK5RAP2 and PDE4DIP isoform 2/MMG8/SMYLE; within this complex, MAPRE1 binding to CDK5RAP2 may be mediated by PDE4DIP. Contrary to other mammalian species, does not interact with CDK5RAP2, possibly due to the lack of conservation of the MAPRE1-binding motif in rat CDK5RAP2. Interacts with AKNA. Interacts with GAS2L1, GAS2L2, and GAS2L3. Interacts with RARRES1 and AGBL2. Acetylation at Lys-220 by KAT2B/PCAF promotes dynamic kinetochore-microtubule interactions in early mitosis. In terms of processing, crotonylated by KAT5 during mitosis, promoting astral microtubule plasticity and dynamic connection between astral microtubules and the cortex during mitotic chromosome segregation, thereby ensuring accurate spindle positioning in mitosis. Decrotonylated by HDAC3.

It is found in the cytoplasm. Its subcellular location is the cytoskeleton. The protein resides in the microtubule organizing center. It localises to the centrosome. The protein localises to the golgi apparatus. It is found in the spindle. Its subcellular location is the spindle pole. Its function is as follows. Plus-end tracking protein (+TIP) that binds to the plus-end of microtubules and regulates the dynamics of the microtubule cytoskeleton. Recruits other +TIP proteins to microtubules by binding to a conserved Ser-X-Leu-Pro (SXLP) motif in their polypeptide chains. Promotes cytoplasmic microtubule nucleation and elongation. Involved in mitotic spindle positioning by stabilizing microtubules and promoting dynamic connection between astral microtubules and the cortex during mitotic chromosome segregation. Assists chromosome alignment in metaphase by recruiting the SKA complex to the spindle and stabilizing its interactions with microtubule bundles (K-fibers). Also acts as a regulator of minus-end microtubule organization: interacts with the complex formed by AKAP9 and PDE4DIP, leading to recruit CAMSAP2 to the Golgi apparatus, thereby tethering non-centrosomal minus-end microtubules to the Golgi, an important step for polarized cell movement. Promotes elongation of CAMSAP2-decorated microtubule stretches on the minus-end of microtubules. Acts as a regulator of autophagosome transport via interaction with CAMSAP2. Functions downstream of Rho GTPases and DIAPH1 in stable microtubule formation. May play a role in cell migration. This Rattus norvegicus (Rat) protein is Microtubule-associated protein RP/EB family member 1 (Mapre1).